Reading from the N-terminus, the 443-residue chain is F-box/LRR-repeat protein At2g42720 (443 aa).

In terms of domain architecture, F-box spans 1 to 47 (MDRISSLPDEILEHILSFLSTKEAALTSSLSTRWKNVFVFVPSLHLD). 6 LRR repeats span residues 139–167 (KLRLGRGFTIKLCHENVYLPMLKTLCLDT), 169–194 (DFDGDHNVFETLLPRCPLLEELVLED), 201–236 (CGSVSSPSLKRLRIRFFHIPIISLDVPGLVYLELSC), 271–296 (SSHLVPADMMDLITGIRKVKVLHLTS), 323–348 (DKKQGWQILPLLIKNSPNLETLVFKG), and 363–389 (CSGILGKSSSCLSSSRVKVLEIWSYQG).

The chain is F-box/LRR-repeat protein At2g42720 from Arabidopsis thaliana (Mouse-ear cress).